The following is an 889-amino-acid chain: Cytoplasmic aconitate hydratase (889 aa).

Residues Gln-86 and 205 to 207 (DSH) each bind substrate. [4Fe-4S] cluster-binding residues include Cys-437, Cys-503, and Cys-506. Substrate contacts are provided by residues Arg-536, Arg-541, Arg-699, and 779-780 (SR).

Belongs to the aconitase/IPM isomerase family. Interacts (when associated with the 4Fe-4S) with FBXL5. Interacts with frataxin(81-210). [4Fe-4S] cluster serves as cofactor.

The protein localises to the cytoplasm. It localises to the cytosol. The catalysed reaction is citrate = D-threo-isocitrate. Bifunctional iron sensor that switches between 2 activities depending on iron availability. Iron deprivation, promotes its mRNA binding activity through which it regulates the expression of genes involved in iron uptake, sequestration and utilization. Binds to iron-responsive elements (IRES) in the untranslated region of target mRNAs preventing for instance the translation of ferritin and aminolevulinic acid synthase and stabilizing the transferrin receptor mRNA. In terms of biological role, conversely, when cellular iron levels are high, binds a 4Fe-4S cluster which precludes RNA binding activity and promotes the aconitase activity, the isomerization of citrate to isocitrate via cis-aconitate. The chain is Cytoplasmic aconitate hydratase (Aco1) from Mus musculus (Mouse).